The primary structure comprises 433 residues: Phosphomethylpyrimidine synthase (433 aa).

Substrate contacts are provided by residues N68, M97, Y126, H162, S184–G186, D225–R228, and E264. H268 contacts Zn(2+). Y291 is a binding site for substrate. Residue H332 coordinates Zn(2+). Residues C408, C411, and C415 each coordinate [4Fe-4S] cluster.

The protein belongs to the ThiC family. [4Fe-4S] cluster serves as cofactor.

It catalyses the reaction 5-amino-1-(5-phospho-beta-D-ribosyl)imidazole + S-adenosyl-L-methionine = 4-amino-2-methyl-5-(phosphooxymethyl)pyrimidine + CO + 5'-deoxyadenosine + formate + L-methionine + 3 H(+). The protein operates within cofactor biosynthesis; thiamine diphosphate biosynthesis. Catalyzes the synthesis of the hydroxymethylpyrimidine phosphate (HMP-P) moiety of thiamine from aminoimidazole ribotide (AIR) in a radical S-adenosyl-L-methionine (SAM)-dependent reaction. In Fusobacterium nucleatum subsp. nucleatum (strain ATCC 25586 / DSM 15643 / BCRC 10681 / CIP 101130 / JCM 8532 / KCTC 2640 / LMG 13131 / VPI 4355), this protein is Phosphomethylpyrimidine synthase.